The primary structure comprises 601 residues: Aspartate--tRNA(Asp/Asn) ligase (601 aa).

Glu174 contributes to the L-aspartate binding site. Residues 198 to 201 (QLFK) are aspartate. Arg220 lines the L-aspartate pocket. ATP-binding positions include 220 to 222 (RDE) and Gln229. His459 is an L-aspartate binding site. Residue Glu493 participates in ATP binding. Arg500 contacts L-aspartate. 545-548 (GLDR) is an ATP binding site.

It belongs to the class-II aminoacyl-tRNA synthetase family. Type 1 subfamily. In terms of assembly, homodimer.

It is found in the cytoplasm. The catalysed reaction is tRNA(Asx) + L-aspartate + ATP = L-aspartyl-tRNA(Asx) + AMP + diphosphate. Aspartyl-tRNA synthetase with relaxed tRNA specificity since it is able to aspartylate not only its cognate tRNA(Asp) but also tRNA(Asn). Reaction proceeds in two steps: L-aspartate is first activated by ATP to form Asp-AMP and then transferred to the acceptor end of tRNA(Asp/Asn). This Variovorax paradoxus (strain S110) protein is Aspartate--tRNA(Asp/Asn) ligase.